The primary structure comprises 140 residues: Large-conductance mechanosensitive channel (140 aa).

2 helical membrane passes run 11–31 and 82–102; these read FAMR…GAFG and GNFI…FLLV.

Belongs to the MscL family. In terms of assembly, homopentamer.

It localises to the cell inner membrane. In terms of biological role, channel that opens in response to stretch forces in the membrane lipid bilayer. May participate in the regulation of osmotic pressure changes within the cell. This Parabacteroides distasonis (strain ATCC 8503 / DSM 20701 / CIP 104284 / JCM 5825 / NCTC 11152) protein is Large-conductance mechanosensitive channel.